The primary structure comprises 171 residues: MIDRATLEQRVSAQFPTVRIGDESGDLCLTVERQQLPALAGWLRDEPDLAFTFLNQLCGVDYLGRDPRFEVVVHLTSFQNKMRVTLHIEVPEADPTIPTLARLFPTANFQERETYDMFGIIFTGHPGLERILMPEDWLGHPQRKDHPLGYEEVAFTHNEDWIYANKPFAKE.

The protein belongs to the complex I 30 kDa subunit family. NDH-1 is composed of 14 different subunits. Subunits NuoB, C, D, E, F, and G constitute the peripheral sector of the complex.

The protein resides in the cell membrane. The enzyme catalyses a quinone + NADH + 5 H(+)(in) = a quinol + NAD(+) + 4 H(+)(out). In terms of biological role, NDH-1 shuttles electrons from NADH, via FMN and iron-sulfur (Fe-S) centers, to quinones in the respiratory chain. The immediate electron acceptor for the enzyme in this species is believed to be ubiquinone. Couples the redox reaction to proton translocation (for every two electrons transferred, four hydrogen ions are translocated across the cytoplasmic membrane), and thus conserves the redox energy in a proton gradient. The protein is NADH-quinone oxidoreductase subunit C of Herpetosiphon aurantiacus (strain ATCC 23779 / DSM 785 / 114-95).